Consider the following 404-residue polypeptide: Cysteine desulfurase IscS (404 aa).

Pyridoxal 5'-phosphate-binding positions include 75–76 (AT), Asn155, Gln183, and 203–205 (SGH). Lys206 bears the N6-(pyridoxal phosphate)lysine mark. Pyridoxal 5'-phosphate is bound at residue Thr243. Cys328 functions as the Cysteine persulfide intermediate in the catalytic mechanism. Cys328 contacts [2Fe-2S] cluster.

Belongs to the class-V pyridoxal-phosphate-dependent aminotransferase family. NifS/IscS subfamily. Homodimer. Forms a heterotetramer with IscU, interacts with other sulfur acceptors. The cofactor is pyridoxal 5'-phosphate.

It localises to the cytoplasm. The catalysed reaction is (sulfur carrier)-H + L-cysteine = (sulfur carrier)-SH + L-alanine. It functions in the pathway cofactor biosynthesis; iron-sulfur cluster biosynthesis. Functionally, master enzyme that delivers sulfur to a number of partners involved in Fe-S cluster assembly, tRNA modification or cofactor biosynthesis. Catalyzes the removal of elemental sulfur atoms from cysteine to produce alanine. Functions as a sulfur delivery protein for Fe-S cluster synthesis onto IscU, an Fe-S scaffold assembly protein, as well as other S acceptor proteins. This chain is Cysteine desulfurase IscS, found in Shewanella frigidimarina (strain NCIMB 400).